A 248-amino-acid chain; its full sequence is MIIAQNKTNYQDLLKTLAVIAMTIDHIGLYLYPELTIMRIIGRIAMPVFCFFAGYNFYDKPKTRIIIYGVILQIYTTILFKQFLTTNILISIYLGQCYIYYFRNSITSFFYNGFCHVAVMIILWYISWTLIDYGTLVIAIMILGFIAQHEKTNLKLCCFIAIFTSIVHSTFFTLLIPLSDFNFSNTDLILNLTFLTITYILMILSDYSQKILINIKWISRNVIYIYCIQIIILQFIFIYKYTYGFKNW.

Helical transmembrane passes span 65–85, 105–125, 126–146, 156–176, 188–208, and 222–242; these read IIIY…QFLT, SITS…ILWY, ISWT…LGFI, LCCF…TLLI, LILN…SDYS, and VIYI…YKYT.

The protein localises to the cell membrane. This is an uncharacterized protein from Rickettsia prowazekii (strain Madrid E).